A 7639-amino-acid polypeptide reads, in one-letter code: Nonribosomal peptide synthetase 4 (7639 aa).

Residues 244 to 636 (WQGAMRPDAE…AGRKDAQIKF (393 aa)) are adenylation 1. Positions 776 to 852 (TFSNGTESQL…ALARHVKEIE (77 aa)) constitute a Carrier 1 domain. S813 bears the O-(pantetheine 4'-phosphoryl)serine mark. An epimerization 1 region spans residues 865–1295 (FELSPIQRLY…EQNLSLLVES (431 aa)). Positions 1337-1767 (VEDIYPCSPM…HLGPRHHQQI (431 aa)) are condensation 1. The segment at 1786-2181 (FEEQAILRPE…FGRKDTQVKL (396 aa)) is adenylation 2. The region spanning 2313–2389 (APASDMEKQL…DMAQSALPLS (77 aa)) is the Carrier 2 domain. S2350 bears the O-(pantetheine 4'-phosphoryl)serine mark. The interval 2426–2852 (VEDIYPCTPL…LISTRDYQSL (427 aa)) is condensation 2. Residues 2878 to 3269 (QPLDKLAVCA…QGRKDNQVKI (392 aa)) are adenylation 3. Positions 3403–3479 (REATETETKL…KLASFVQAVE (77 aa)) constitute a Carrier 3 domain. O-(pantetheine 4'-phosphoryl)serine is present on S3440. The interval 3491 to 3928 (AFPLSPIQKL…RMTQAKAEPQ (438 aa)) is epimerization 2. Residues 3961-4389 (EAVYPCSPVQ…VSDDCAQQLT (429 aa)) form a condensation 3 region. The interval 4407 to 4810 (FERNVQSLPH…VSRKDTQIKL (404 aa)) is adenylation 4. One can recognise a Carrier 4 domain in the interval 4944 to 5020 (APTTMMQRKL…EMATCCGHSE (77 aa)). Residue S4981 is modified to O-(pantetheine 4'-phosphoryl)serine. Residues 5058-5478 (QDLYPCSSLQ…QFCSEEDLQM (421 aa)) are condensation 4. The adenylation 5 stretch occupies residues 5498 to 5900 (FWQSVATYHD…IGRKDNQVKL (403 aa)). Positions 6039–6115 (TDTTFVGQLL…DLVTLIEKEG (77 aa)) constitute a Carrier 5 domain. O-(pantetheine 4'-phosphoryl)serine is present on S6076. Positions 6133 to 6567 (FALSPIQQLF…EVLGNMAMEL (435 aa)) are epimerization 3. Positions 6607–7032 (VEDMYPCSPM…EALSHLRVSQ (426 aa)) are condensation 5. In terms of domain architecture, Carrier 6 spans 7088-7164 (RDKDQVYNKL…TLLNCLRDKS (77 aa)). S7125 carries the O-(pantetheine 4'-phosphoryl)serine modification. The tract at residues 7254–7603 (LDGEGPLDVA…SNTEVCFLYR (350 aa)) is condensation 6.

The protein belongs to the NRP synthetase family.

The catalysed reaction is D-allo-threonine + D-leucine + D-alanine + L-proline + 2 L-leucine + A = fusahexin + AH2 + 6 H2O. The protein operates within secondary metabolite biosynthesis. Its function is as follows. Nonribosomal peptide synthetase; part of the gene cluster that mediates the biosynthesis of the fusahexin, a cyclic hydrophobic hexapeptide with the amino acid sequence cyclo-(D-Ala-L-Leu-D-allo-Thr-L-Pro-D-Leu-L-Leu) that plays an important role in cell surface hydrophobicity. Fusahexin might also play a role in virulence, sensitivity to osmotic stress and oxidative stress. NRPS4 is the only enzyme within the cluster and its 5 catalytic modules are sufficient to produce fusahexin. The modules 1 to 4 incorporate respectively D-alanine, L-leucine, D-allo-threonine, and L-proline, which is supported by the presence of epimerase domains in modules 1 and 3, which incorporate D-amino acids. The terminal module is responsible for incorporation of the two adjacent leucine units, where the epimerase domain is only used to convert the first unit to D-leucine. The terminal condensation domain (Ct) is involved in cyclization with D-alanine and thereby releasing of fusahexin. This is Nonribosomal peptide synthetase 4 from Gibberella zeae (strain ATCC MYA-4620 / CBS 123657 / FGSC 9075 / NRRL 31084 / PH-1) (Wheat head blight fungus).